We begin with the raw amino-acid sequence, 602 residues long: uncharacterized protein (602 aa).

Belongs to the glycosyltransferase 2 family.

This is an uncharacterized protein from Rickettsia felis (strain ATCC VR-1525 / URRWXCal2) (Rickettsia azadi).